The sequence spans 95 residues: Integration host factor subunit beta (95 aa).

Belongs to the bacterial histone-like protein family. In terms of assembly, heterodimer of an alpha and a beta chain.

This protein is one of the two subunits of integration host factor, a specific DNA-binding protein that functions in genetic recombination as well as in transcriptional and translational control. The polypeptide is Integration host factor subunit beta (Jannaschia sp. (strain CCS1)).